A 332-amino-acid chain; its full sequence is Glycerol-3-phosphate dehydrogenase [NAD(P)+] (332 aa).

NADPH-binding residues include Trp-15, Arg-35, and Lys-108. Residues Lys-108, Gly-137, and Ser-139 each coordinate sn-glycerol 3-phosphate. Position 141 (Ala-141) interacts with NADPH. Sn-glycerol 3-phosphate-binding residues include Lys-192, Asp-245, Ser-255, Arg-256, and Asn-257. Residue Lys-192 is the Proton acceptor of the active site. Arg-256 serves as a coordination point for NADPH. The NADPH site is built by Leu-278 and Glu-280.

It belongs to the NAD-dependent glycerol-3-phosphate dehydrogenase family.

It is found in the cytoplasm. It catalyses the reaction sn-glycerol 3-phosphate + NAD(+) = dihydroxyacetone phosphate + NADH + H(+). It carries out the reaction sn-glycerol 3-phosphate + NADP(+) = dihydroxyacetone phosphate + NADPH + H(+). Its pathway is membrane lipid metabolism; glycerophospholipid metabolism. In terms of biological role, catalyzes the reduction of the glycolytic intermediate dihydroxyacetone phosphate (DHAP) to sn-glycerol 3-phosphate (G3P), the key precursor for phospholipid synthesis. In Methylobacterium radiotolerans (strain ATCC 27329 / DSM 1819 / JCM 2831 / NBRC 15690 / NCIMB 10815 / 0-1), this protein is Glycerol-3-phosphate dehydrogenase [NAD(P)+].